Consider the following 199-residue polypeptide: Copper transport protein CTR4 (199 aa).

Transmembrane regions (helical) follow at residues 62-82 (KGMF…IELI) and 152-172 (AFFV…FIFL).

Belongs to the copper transporter (Ctr) (TC 1.A.56) family. SLC31A subfamily.

The protein resides in the membrane. Required for high affinity copper (probably reduced Cu I) transport into the cell. Plays a role in fungal pathogenesis during host infection. The protein is Copper transport protein CTR4 of Cryptococcus neoformans var. grubii serotype A (strain H99 / ATCC 208821 / CBS 10515 / FGSC 9487) (Filobasidiella neoformans var. grubii).